A 523-amino-acid chain; its full sequence is Lysine-specific demethylase 4D (523 aa).

Positions 18 to 60 constitute a JmjN domain; that stretch reads IMIFHPTKEEFNDFDKYIAYMESQGAHRAGLAKIIPPKEWKAR. 2 positions are modified to polyADP-ribosyl glutamic acid: Glu-26 and Glu-27. 2-oxoglutarate is bound at residue Tyr-136. One can recognise a JmjC domain in the interval 146–312; sequence DENTKQWNLG…YGKMASQCSC (167 aa). Fe cation-binding residues include His-192 and Glu-194. 2-oxoglutarate-binding residues include Asn-202 and Lys-210. 2 residues coordinate Zn(2+): Cys-238 and His-244. Position 245 (Lys-245) interacts with 2-oxoglutarate. A Fe cation-binding site is contributed by His-280. Residues Cys-310 and Cys-312 each contribute to the Zn(2+) site. The disordered stretch occupies residues 407–523; sequence RRSAVSGTAT…ASGCSWAPVP (117 aa). A compositionally biased stretch (low complexity) spans 428–440; that stretch reads KPSSTPSSTPGPS. A compositionally biased stretch (basic residues) spans 448 to 458; that stretch reads NGRRGRGRPPQ.

This sequence belongs to the JHDM3 histone demethylase family. Fe(2+) is required as a cofactor. In terms of processing, ubiquitinated via 'Lys-63'-linked ubiquitin chains. Deubiquitinated by USP14 with the help of TRIM14 leading to stabilization.

It localises to the nucleus. It catalyses the reaction N(6),N(6),N(6)-trimethyl-L-lysyl(9)-[histone H3] + 2 2-oxoglutarate + 2 O2 = N(6)-methyl-L-lysyl(9)-[histone H3] + 2 formaldehyde + 2 succinate + 2 CO2. In terms of biological role, histone demethylase that specifically demethylates 'Lys-9' of histone H3, thereby playing a central role in histone code. Does not demethylate histone H3 'Lys-4', H3 'Lys-27', H3 'Lys-36' nor H4 'Lys-20'. Demethylates both di- and trimethylated H3 'Lys-9' residue, while it has no activity on monomethylated residues. Demethylation of Lys residue generates formaldehyde and succinate. This is Lysine-specific demethylase 4D (KDM4D) from Homo sapiens (Human).